We begin with the raw amino-acid sequence, 2475 residues long: MGNRGSSTSSRPPPSSEANIYAKLQDHIQRQTRPFSGGGYFNGGGDKNPVQHIKDYHIDSVSSKAKLRIIEGIIRAIAKIGFKVDTKQPIEDILKDIKKQLPDPRAGSTFVKNAEKQETVCKMIADAINQEFIDLGQDKLIDTTEGAASICRQIVLYINSLTHGLRAEYLDVHGSIENTLENIKLLNDAIKQLHERMVTEVTKAAPNEEVINAVTMIEAVYRRLLNEQNLQINILTNFIDNILTPTQKELDKLQTDEVDIIKLLNDTNSVLGTKNFGKVLSYTLCNLGIAASVANKINKALQKVGLKVEQYLQSKNWAEFDKELDLKRFSGLVSAENIAEFEKAVNLLRQTFNERHKILENSCAKKGGDEEKTPLDRRIEAQRLDRKHILMEFLNKSTQAYNDFLENVKKIGIKLVKEIALTPNITRLRDALSRINDMGTIALDLSLIGFYTNAAAREERETFLTQFMLVKNVLEEQSKIDPNFKNLYDSCSRLLQIIDFYTDIVQKKYGGGEDCECTRVGGAALTVEELGLSKAARSQVDLNQAINTFMYYYYVAQIYSNLTHNKQEFQSYEENYATILGDAIAGRLMQLDTEKNARINSPAVDLARGHVGPNPGGAQEEDWKATVSAIELEYDVKRRFYRALEGLDLYLKNITKTFVNNIDSIQTVQQMLDGVRIIGRWFTEATGDTLAQVFESFPTSAGNDSNVFTDNAPAGHYYEKVAAEIQQGRSVGTLRPVRASQAKNIRDLIGRSLSNFQALKNIINAFARIGDMLGGEELRQMVPMSPLQIYKTLLEYIQHSALSVGLKNLNQSEIGGQRVALARTPEEAAQRVYLSTVRVNDALSTRWETEDVFFTFMLKSMAAKIFIVLGIYDMFERPEPVYKLIPTRMILGGADELEPEVIPEAAELYFRLPRLAEFYQKLFSFRDENVQISMLPELEGIFSGLIRIIFMRPIELINIGDYSETEIRQLIKEINVIYQHFNLEYGEQEATKKALIHFVNEINRRFGVITRTEWEKFQRIVQEARTMNDFGMMNQTNYSILPDEDGYTQSSQLLPSDRFISPSSQPTPKWRPALYNIDSVDVQTGMLQPNSQWDLVQKFRKQLSEMFEDPSLQQELGKVSYQELIRQAINELKKDHTDKIQIVSKLIQGSESLADTDVNKIFLFHETVITGLNLLSAIYVLLNNFRNNIKGLDLDTIQKSIIEWLRETQAANVNHANLIDWLGRKHGAISEIRNPGLVVKENDARLSRVYPDPTTNATAPQDQNLVTETLFAWIVPYVGIPAGGGVRAEQELAARYLVDNQRIMQLLLTNIFEMTSSFNKMVQVRFPETSTAQVHLDFTGLISLIDSLMADTKYFLNLLRPHIDKNIIQYYENRSNPGSFYWLEEHLIDKLIKPPTDAGGRPLPGGELGLEGVNQIINKTYTLLTKPYNVLQLQGGAQRRDAANIQINNNPQPSERFEQYGRVFSRLVFYDALENNSGLRVEQVVLGDFRLSNLIRTNNAQEENALSYWDNIALRTYANVNDAANNLRRYRLYGSDHGIQNNRSMMMVFNQLVASYIARFYDAPSGKIYLNLINAFANGNFSQAVMEMGYAHPDLARNNNAFGHRGDPTEQSVLLLSLGLILQRLIKDTNRQGLSQHLISTLTEIPIYLKENYRANLPLFNKMFNILISQGELLKQFIQYTNVQLARPNLMGLLGANNDSIIYYNNNNVPTTGLSVGQAALRGIGGVFRPNVTLMPLGDAQNNTSDIVRKRLVAVIDGIIRGSHTLADSAMEVLHELTDHPIYLETEEHFIQNYMSRYNKEPLMPFSLSLYYLRDLRIENNEVYDPLLYPNLESGSPEFKLLYGTRKLLGNDPVQLSDMPGVQLIMKNYNETVVAREQITPTRFEHFYTHAIQALRFIINIRSFKTVMMYNENTFGGVNLISENRDDKPIITAGIGMNAVYSLRKTLQDVISFVESSYQEEQINHIHKIVSPKGQTRTLGSNRERERIFNLFDMNIIPINVNALMRSIPLANIYNYDYSFEEIACLMYGISAEKVRSLDTTAPQPDVAEVLNIPNRPPINTREFMLKLLINPYVSVSITQYGNELLSKGNAGYMSRIFRGDNALNMGRPKFLSDQIFNKVLFGSLYPTQFDYDEAGPGLAAGIQRGRERWGHPMSIYINQALHEIVRTIRLAETVRGLRNVIDRNQIIGELNAFRTQLEDTRREVNNLIQTPEIQNNPTPEIIAAIQNWVQQYRGQITNLIDLIGNAGQANSMINLIQNITPQTAGAQLTALFNIRGLPAPPPRQPLQNDIEAMQWFMTIVINHPPILIAPFMLLVNNLKEFLNTLERYVYKTPRWLGPGTARIAQPPVGMAPGINMRHHTSYTENSVLTYITEQNREEGPWSIVKQVGVGIQKPTLVHIGKDRFDTRLIRNLIFITNIQRLLRLRLNLELSQFRNVLVSPDHIINPSITEYGFSITGPSETFSDKQYDSDIRIL.

The N-myristoyl glycine; by host moiety is linked to residue glycine 2. Residues 2184–2211 (RNQIIGELNAFRTQLEDTRREVNNLIQT) are a coiled coil.

This sequence belongs to the asfivirus polyprotein pp220 family. Post-translationally, the polyprotein is not glycosylated. Specific enzymatic cleavages in vivo by the viral pS273R protease yield mature proteins.

Its subcellular location is the host cytoplasm. The protein localises to the host perinuclear region. The protein resides in the virion. It is found in the host nucleus. Its function is as follows. Essential for the core assembly. Its myristoyl moiety may function as a membrane-anchoring signal to bind the developing core shell to the inner viral envelope. Functionally, the structural protein p34 is a component of the virus core shell. In terms of biological role, the structural protein p14 is a component of the virus core shell. The structural protein p37 is a component of the virus core shell. Its function is as follows. The structural protein p150 is a component of the virus core shell. The polypeptide is Polyprotein pp220 (African swine fever virus (isolate Warthog/Namibia/Wart80/1980) (ASFV)).